The primary structure comprises 213 residues: MSAATSPSERRVSARIGAISESATLAVDAKAKALKAAGRPVIGFGAGEPDFPTPDYIVDAAVEACRNPKYHRYTPQRAPELKAAIAEKTLRDSGYEVDAGQILVTNGGKQAIYEAFAAILDPGDEVIVPAPYWTTYPESIRLAGGVPVEVVADETTGYRVSVEQLEAARTEKTKVVLFVSPSNPTGAVYSEADAEAIGRWAVEHGLWVMTDEI.

Residues glycine 47, tryptophan 133, and asparagine 183 each coordinate L-aspartate.

This sequence belongs to the class-I pyridoxal-phosphate-dependent aminotransferase family. As to quaternary structure, homodimer. The cofactor is pyridoxal 5'-phosphate.

The protein localises to the cytoplasm. The enzyme catalyses L-aspartate + 2-oxoglutarate = oxaloacetate + L-glutamate. In Streptomyces griseus, this protein is Probable aspartate aminotransferase (aspC).